A 362-amino-acid chain; its full sequence is 3-dehydroquinate synthase (362 aa).

NAD(+) contacts are provided by residues 72–77 (DGEQYK), 106–110 (GVVGD), 130–131 (TT), lysine 143, lysine 152, and 170–173 (CLKT). Glutamate 185, histidine 248, and histidine 265 together coordinate Zn(2+).

The protein belongs to the sugar phosphate cyclases superfamily. Dehydroquinate synthase family. The cofactor is Co(2+). It depends on Zn(2+) as a cofactor. NAD(+) is required as a cofactor.

Its subcellular location is the cytoplasm. The catalysed reaction is 7-phospho-2-dehydro-3-deoxy-D-arabino-heptonate = 3-dehydroquinate + phosphate. It functions in the pathway metabolic intermediate biosynthesis; chorismate biosynthesis; chorismate from D-erythrose 4-phosphate and phosphoenolpyruvate: step 2/7. Catalyzes the conversion of 3-deoxy-D-arabino-heptulosonate 7-phosphate (DAHP) to dehydroquinate (DHQ). This Aliivibrio fischeri (strain ATCC 700601 / ES114) (Vibrio fischeri) protein is 3-dehydroquinate synthase.